Here is a 348-residue protein sequence, read N- to C-terminus: GTPase Obg 1 (348 aa).

The Obg domain occupies 1–159; sequence MSFVDEAKIH…HCVLLKLKIV (159 aa). The 170-residue stretch at 160–329 folds into the OBG-type G domain; the sequence is SDVGIIGMPN…LHAQVKKAVV (170 aa). GTP-binding positions include 166–173, 191–195, 212–215, 279–282, and 310–312; these read GMPNAGKS, FTTLE, DIPG, NKCD, and GDE. Residues Ser173 and Thr193 each contribute to the Mg(2+) site.

The protein belongs to the TRAFAC class OBG-HflX-like GTPase superfamily. OBG GTPase family. In terms of assembly, monomer. Mg(2+) is required as a cofactor.

It is found in the cytoplasm. In terms of biological role, an essential GTPase which binds GTP, GDP and possibly (p)ppGpp with moderate affinity, with high nucleotide exchange rates and a fairly low GTP hydrolysis rate. Plays a role in control of the cell cycle, stress response, ribosome biogenesis and in those bacteria that undergo differentiation, in morphogenesis control. The protein is GTPase Obg 1 of Anaplasma marginale (strain Florida).